Here is an 839-residue protein sequence, read N- to C-terminus: Protein translocase subunit SecA (839 aa).

Residues glutamine 85, 103 to 107 (GEGKT), and aspartate 493 contribute to the ATP site. Over residues 780–790 (QIHEQERERAS) the composition is skewed to basic and acidic residues. The disordered stretch occupies residues 780-839 (QIHEQERERASQRATTAAPQNIQSQQSANTDDLPKVERNEACPCGSGKKFKNCHGRKSFS). Over residues 791–809 (QRATTAAPQNIQSQQSANT) the composition is skewed to polar residues. 4 residues coordinate Zn(2+): cysteine 821, cysteine 823, cysteine 832, and histidine 833. Positions 827-839 (KKFKNCHGRKSFS) are enriched in basic residues.

Belongs to the SecA family. In terms of assembly, monomer and homodimer. Part of the essential Sec protein translocation apparatus which comprises SecA, SecYEG and auxiliary proteins SecDF. Other proteins may also be involved. Zn(2+) is required as a cofactor.

Its subcellular location is the cell membrane. It is found in the cytoplasm. The enzyme catalyses ATP + H2O + cellular proteinSide 1 = ADP + phosphate + cellular proteinSide 2.. Part of the Sec protein translocase complex. Interacts with the SecYEG preprotein conducting channel. Has a central role in coupling the hydrolysis of ATP to the transfer of proteins into and across the cell membrane, serving as an ATP-driven molecular motor driving the stepwise translocation of polypeptide chains across the membrane. In Streptococcus pyogenes serotype M6 (strain ATCC BAA-946 / MGAS10394), this protein is Protein translocase subunit SecA.